Reading from the N-terminus, the 150-residue chain is UPF0756 membrane protein Dd1591_2981 (150 aa).

A run of 4 helical transmembrane segments spans residues 10 to 32 (ILLALAALGIISQNMTVTLAILF), 51 to 71 (YGLSFGVLVLTIGVMAPIASG), 88 to 108 (LMAVAIGVAVSWLGGRGVVLM), and 127 to 147 (ALFRGVPVGPLIAAGLLSLLI).

This sequence belongs to the UPF0756 family.

The protein resides in the cell membrane. In Dickeya chrysanthemi (strain Ech1591) (Dickeya zeae (strain Ech1591)), this protein is UPF0756 membrane protein Dd1591_2981.